Consider the following 419-residue polypeptide: Histidine--tRNA ligase (419 aa).

Belongs to the class-II aminoacyl-tRNA synthetase family. In terms of assembly, homodimer.

The protein localises to the cytoplasm. It catalyses the reaction tRNA(His) + L-histidine + ATP = L-histidyl-tRNA(His) + AMP + diphosphate + H(+). The chain is Histidine--tRNA ligase from Syntrophotalea carbinolica (strain DSM 2380 / NBRC 103641 / GraBd1) (Pelobacter carbinolicus).